The primary structure comprises 360 residues: Protein phosphatase 1L (360 aa).

Over 1–25 (MIEDTMTLLSLLGRIMRYFLLRPET) the chain is Extracellular. Residues 26–42 (LFLLCISLALWSYFFHT) traverse the membrane as a helical segment. Over 43 to 360 (DEVKTIVKSS…FRNSSKTEEH (318 aa)) the chain is Cytoplasmic. In terms of domain architecture, PPM-type phosphatase spans 92 to 351 (NVAVYSIQGR…DNITVMVVKF (260 aa)). Mn(2+) contacts are provided by Asp-128, Gly-129, Asp-302, and Asp-342.

It belongs to the PP2C family. As to quaternary structure, interacts with MAP3K7/TAK1 and MAP3K5. Mg(2+) serves as cofactor. The cofactor is Mn(2+). Expressed in brain, heart, testis, liver, lung and skeletal muscle.

The protein localises to the membrane. It carries out the reaction O-phospho-L-seryl-[protein] + H2O = L-seryl-[protein] + phosphate. The catalysed reaction is O-phospho-L-threonyl-[protein] + H2O = L-threonyl-[protein] + phosphate. Acts as a suppressor of the SAPK signaling pathways by associating with and dephosphorylating MAP3K7/TAK1 and MAP3K5, and by attenuating the association between MAP3K7/TAK1 and MAP2K4 or MAP2K6. The sequence is that of Protein phosphatase 1L (Ppm1l) from Mus musculus (Mouse).